The following is a 282-amino-acid chain: Small ribosomal subunit protein uS2 (282 aa).

The disordered stretch occupies residues 245–266 (AEEAVEELPLPTGEAQDEASSK).

It belongs to the universal ribosomal protein uS2 family.

The chain is Small ribosomal subunit protein uS2 (rpsB) from Chlamydia trachomatis serovar D (strain ATCC VR-885 / DSM 19411 / UW-3/Cx).